Here is a 431-residue protein sequence, read N- to C-terminus: Adenylosuccinate synthetase (431 aa).

GTP is bound by residues Gly12–Lys18 and Gly40–Thr42. The Proton acceptor role is filled by Asp13. Mg(2+)-binding residues include Asp13 and Gly40. IMP contacts are provided by residues Asp13–Lys16, Asn38–His41, Thr131, Arg145, Gln225, Thr240, and Arg304. The active-site Proton donor is His41. A substrate-binding site is contributed by Thr300 to Arg306. GTP-binding positions include Arg306, Lys332–Asp334, and Ser414–Ser416.

This sequence belongs to the adenylosuccinate synthetase family. Homodimer. The cofactor is Mg(2+).

The protein localises to the cytoplasm. It catalyses the reaction IMP + L-aspartate + GTP = N(6)-(1,2-dicarboxyethyl)-AMP + GDP + phosphate + 2 H(+). It functions in the pathway purine metabolism; AMP biosynthesis via de novo pathway; AMP from IMP: step 1/2. Plays an important role in the de novo pathway of purine nucleotide biosynthesis. Catalyzes the first committed step in the biosynthesis of AMP from IMP. This is Adenylosuccinate synthetase from Roseobacter denitrificans (strain ATCC 33942 / OCh 114) (Erythrobacter sp. (strain OCh 114)).